A 137-amino-acid chain; its full sequence is Pro-corazonin (137 aa).

The first 20 residues, methionine 1–alanine 20, serve as a signal peptide directing secretion. The residue at position 21 (glutamine 21) is a Pyrrolidone carboxylic acid. Asparagine 31 is modified (asparagine amide). A propeptide spanning residues phenylalanine 68–leucine 137 is cleaved from the precursor.

The protein belongs to the corazonin family.

It is found in the secreted. In terms of biological role, cardioactive peptide. Corazonin is probably involved in the physiological regulation of the heart beat. The sequence is that of Pro-corazonin from Aedes aegypti (Yellowfever mosquito).